A 395-amino-acid chain; its full sequence is Elongation factor Tu (395 aa).

Positions 10 to 204 constitute a tr-type G domain; the sequence is KPHVNIGTIG…EVDAYIPTPE (195 aa). The G1 stretch occupies residues 19–26; sequence GHVDHGKT. 19 to 26 is a GTP binding site; that stretch reads GHVDHGKT. T26 is a Mg(2+) binding site. A G2 region spans residues 60 to 64; sequence GITIS. Positions 81–84 are G3; it reads DCPG. GTP contacts are provided by residues 81-85 and 136-139; these read DCPGH and NKCD. The tract at residues 136 to 139 is G4; that stretch reads NKCD. The tract at residues 174–176 is G5; that stretch reads SAL.

The protein belongs to the TRAFAC class translation factor GTPase superfamily. Classic translation factor GTPase family. EF-Tu/EF-1A subfamily. Monomer.

It localises to the cytoplasm. It catalyses the reaction GTP + H2O = GDP + phosphate + H(+). GTP hydrolase that promotes the GTP-dependent binding of aminoacyl-tRNA to the A-site of ribosomes during protein biosynthesis. The protein is Elongation factor Tu of Bacillus cereus (strain ATCC 10987 / NRS 248).